The primary structure comprises 212 residues: Redox-sensing transcriptional repressor Rex (212 aa).

The H-T-H motif DNA-binding region spans 16-55 (IYYRYLNILLDADKTRVSSTELSEAVKVDSATIRRDFSYF). 90–95 (GVGNLG) contacts NAD(+).

Belongs to the transcriptional regulatory Rex family. Homodimer.

Its subcellular location is the cytoplasm. Functionally, modulates transcription in response to changes in cellular NADH/NAD(+) redox state. This is Redox-sensing transcriptional repressor Rex from Levilactobacillus brevis (strain ATCC 367 / BCRC 12310 / CIP 105137 / JCM 1170 / LMG 11437 / NCIMB 947 / NCTC 947) (Lactobacillus brevis).